Consider the following 316-residue polypeptide: tRNA selenocysteine 1-associated protein 1-like (316 aa).

RRM domains are found at residues Thr-6–Tyr-89 and Phe-99–Asn-178. Over residues Pro-239 to Pro-248 the composition is skewed to pro residues. The segment at Pro-239–Met-285 is disordered.

The protein belongs to the RRM TRSPAP family.

The protein localises to the nucleus. It localises to the cytoplasm. Involved in the early steps of selenocysteine biosynthesis and tRNA(Sec) charging to the later steps resulting in the cotranslational incorporation of selenocysteine into selenoproteins. The polypeptide is tRNA selenocysteine 1-associated protein 1-like (trnau1apl) (Danio rerio (Zebrafish)).